The sequence spans 246 residues: MGSKYKRILIKLSGEALAGEGEFGIDTNKAHSLAEEIKEVHDLGVEIALVVGGGNIIRGTNLAKVGIDRATADYMGMLATIQNALALQDACEKKGLYTRVQSAIEINSIAESYIRRRAVRHLEKRRIVIFAGGTGNPYFTTDTTASLRAVEVGCDVILKATKVDGVYTADPKKDNGAKRYSQISFMESINRRLKVMDSTALSLCMENNMPIIVFDIFKQGNLKDLVTGKNIGTLISNSEDIQIDGK.

11-14 serves as a coordination point for ATP; it reads KLSG. Position 53 (Gly-53) interacts with UMP. 2 residues coordinate ATP: Gly-54 and Arg-58. Residues Asp-73 and 134–141 contribute to the UMP site; that span reads TGNPYFTT. The ATP site is built by Thr-161, Tyr-167, and Asp-170.

This sequence belongs to the UMP kinase family. As to quaternary structure, homohexamer.

Its subcellular location is the cytoplasm. The catalysed reaction is UMP + ATP = UDP + ADP. It participates in pyrimidine metabolism; CTP biosynthesis via de novo pathway; UDP from UMP (UMPK route): step 1/1. Inhibited by UTP. Catalyzes the reversible phosphorylation of UMP to UDP. In Leptospira borgpetersenii serovar Hardjo-bovis (strain JB197), this protein is Uridylate kinase.